The chain runs to 376 residues: MKIVVDENMPYVEPLFGDLGEIIPVNGRTLTPEQVQDADVLLVRSVTRVNAALLEANQKLKFVGSATIGTDHVDLAYLATRGIVFSNAPGCNATAVGEFAFIAMLELAARFNSPLRGKVVGIVGAGNTGSATAKCLEAFGIKVLLNDPIKEAEGDPRDFVSLETLLQEADIISLHVPITRTGEHKTLHLFDEARLMSLKANIWLINCCRGDVIDNQALIKVKQQRDDLKLVLDVWEGEPNPMPELVPFAEFATPHIAGYSLEGKARGTFMLYQKLCELLAIPATKGLSDLLPRFNIKAVELEQLPDEKALLQLARFVYDLRDDDAVFRNCFAKENGFDIMRKNHKHRREFSALALAYRGQSEVDWLSNLGFSGVGR.

Substrate contacts are provided by serine 45 and threonine 67. Aspartate 147 provides a ligand contact to NAD(+). Residue arginine 209 is part of the active site. Aspartate 233 is a binding site for NAD(+). Glutamate 238 is an active-site residue. The Proton donor role is filled by histidine 255. Residue glycine 258 coordinates NAD(+). A substrate-binding site is contributed by tyrosine 259.

The protein belongs to the D-isomer specific 2-hydroxyacid dehydrogenase family. PdxB subfamily. In terms of assembly, homodimer.

It localises to the cytoplasm. It catalyses the reaction 4-phospho-D-erythronate + NAD(+) = (R)-3-hydroxy-2-oxo-4-phosphooxybutanoate + NADH + H(+). It participates in cofactor biosynthesis; pyridoxine 5'-phosphate biosynthesis; pyridoxine 5'-phosphate from D-erythrose 4-phosphate: step 2/5. In terms of biological role, catalyzes the oxidation of erythronate-4-phosphate to 3-hydroxy-2-oxo-4-phosphonooxybutanoate. This is Erythronate-4-phosphate dehydrogenase from Shewanella oneidensis (strain ATCC 700550 / JCM 31522 / CIP 106686 / LMG 19005 / NCIMB 14063 / MR-1).